A 348-amino-acid chain; its full sequence is D-erythrose-4-phosphate dehydrogenase (348 aa).

Residues R12 to I13 and R81 each bind NAD(+). Residues S154–T156, R200, T213–K214, and R236 each bind substrate. C155 serves as the catalytic Nucleophile. NAD(+) is bound at residue N318.

The protein belongs to the glyceraldehyde-3-phosphate dehydrogenase family. Epd subfamily. As to quaternary structure, homotetramer.

The protein resides in the cytoplasm. It catalyses the reaction D-erythrose 4-phosphate + NAD(+) + H2O = 4-phospho-D-erythronate + NADH + 2 H(+). It functions in the pathway cofactor biosynthesis; pyridoxine 5'-phosphate biosynthesis; pyridoxine 5'-phosphate from D-erythrose 4-phosphate: step 1/5. Catalyzes the NAD-dependent conversion of D-erythrose 4-phosphate to 4-phosphoerythronate. The polypeptide is D-erythrose-4-phosphate dehydrogenase (Salmonella schwarzengrund (strain CVM19633)).